A 302-amino-acid polypeptide reads, in one-letter code: Putative S-adenosyl-L-methionine-dependent methyltransferase MUL_2961 (302 aa).

Residues aspartate 128 and 157 to 158 each bind S-adenosyl-L-methionine; that span reads DL.

This sequence belongs to the UPF0677 family.

Its function is as follows. Exhibits S-adenosyl-L-methionine-dependent methyltransferase activity. The protein is Putative S-adenosyl-L-methionine-dependent methyltransferase MUL_2961 of Mycobacterium ulcerans (strain Agy99).